The following is a 439-amino-acid chain: Dihydroorotase (439 aa).

2 residues coordinate Zn(2+): H73 and H75. Substrate-binding positions include 75–77 (HLR) and N107. Positions 165, 192, and 245 each coordinate Zn(2+). N291 provides a ligand contact to substrate. D318 contacts Zn(2+). D318 is an active-site residue. H322 serves as a coordination point for substrate.

This sequence belongs to the metallo-dependent hydrolases superfamily. DHOase family. Class I DHOase subfamily. Zn(2+) serves as cofactor.

It catalyses the reaction (S)-dihydroorotate + H2O = N-carbamoyl-L-aspartate + H(+). Its pathway is pyrimidine metabolism; UMP biosynthesis via de novo pathway; (S)-dihydroorotate from bicarbonate: step 3/3. Its function is as follows. Catalyzes the reversible cyclization of carbamoyl aspartate to dihydroorotate. The sequence is that of Dihydroorotase from Syntrophobacter fumaroxidans (strain DSM 10017 / MPOB).